Here is a 97-residue protein sequence, read N- to C-terminus: Cell division topological specificity factor (97 aa).

The protein belongs to the MinE family.

Prevents the cell division inhibition by proteins MinC and MinD at internal division sites while permitting inhibition at polar sites. This ensures cell division at the proper site by restricting the formation of a division septum at the midpoint of the long axis of the cell. The chain is Cell division topological specificity factor from Synechococcus sp. (strain RCC307).